Here is a 461-residue protein sequence, read N- to C-terminus: Bifunctional protein HldE (461 aa).

Residues 1–311 (MKKILVVGDL…EEIALILNQT (311 aa)) form a ribokinase region. Residue 191–194 (NRAE) participates in ATP binding. Residue aspartate 260 is part of the active site. The tract at residues 332–461 (FTNGCFDLLH…IEKIKRTHND (130 aa)) is cytidylyltransferase.

This sequence in the N-terminal section; belongs to the carbohydrate kinase PfkB family. In the C-terminal section; belongs to the cytidylyltransferase family. In terms of assembly, homodimer.

The enzyme catalyses D-glycero-beta-D-manno-heptose 7-phosphate + ATP = D-glycero-beta-D-manno-heptose 1,7-bisphosphate + ADP + H(+). It catalyses the reaction D-glycero-beta-D-manno-heptose 1-phosphate + ATP + H(+) = ADP-D-glycero-beta-D-manno-heptose + diphosphate. Its pathway is nucleotide-sugar biosynthesis; ADP-L-glycero-beta-D-manno-heptose biosynthesis; ADP-L-glycero-beta-D-manno-heptose from D-glycero-beta-D-manno-heptose 7-phosphate: step 1/4. It participates in nucleotide-sugar biosynthesis; ADP-L-glycero-beta-D-manno-heptose biosynthesis; ADP-L-glycero-beta-D-manno-heptose from D-glycero-beta-D-manno-heptose 7-phosphate: step 3/4. Catalyzes the phosphorylation of D-glycero-D-manno-heptose 7-phosphate at the C-1 position to selectively form D-glycero-beta-D-manno-heptose-1,7-bisphosphate. In terms of biological role, catalyzes the ADP transfer from ATP to D-glycero-beta-D-manno-heptose 1-phosphate, yielding ADP-D-glycero-beta-D-manno-heptose. The chain is Bifunctional protein HldE from Helicobacter pylori (strain P12).